We begin with the raw amino-acid sequence, 1381 residues long: Major capsid protein (1381 aa).

It belongs to the herpesviridae major capsid protein family. Homomultimer. Makes the hexons and eleven out of twelve pentons. Interacts with triplex proteins 1/TRX1 and 2/TRX2; adjacent capsomers are linked together in groups of three by triplexes, heterotrimeric complexes composed of one molecule of TRX1 and two molecules of TRX2. Interacts with scaffold protein; this interaction allows efficient MCP transport to the host nucleus. Interacts with capsid vertex component 2/CVC2. Interacts with the small capsomere-interacting protein/SCP.

The protein localises to the virion. Its subcellular location is the host nucleus. Functionally, self-assembles to form an icosahedral capsid with a T=16 symmetry, about 200 nm in diameter, and consisting of 150 hexons and 12 pentons (total of 162 capsomers). Hexons form the edges and faces of the capsid and are each composed of six MCP molecules. In contrast, one penton is found at each of the 12 vertices. Eleven of the pentons are MCP pentamers, while the last vertex is occupied by the portal complex. The capsid is surrounded by a layer of proteinaceous material designated the tegument which, in turn, is enclosed in an envelope of host cell-derived lipids containing virus-encoded glycoproteins. The protein is Major capsid protein of Epstein-Barr virus (strain AG876) (HHV-4).